The following is a 639-amino-acid chain: MGKIIGIDLGTTNSCVAVLDGGKARVLENAEGDRTTPSIIAYTDDETIVGSPAKRQAVTNPTNTFFAIKRLIGRRFKDDEVQRDVNIMPFKIIQADNGDAWVESRGNKMAPPQVSAEILKKMKKTAEDFLGEEVTEAVITVPAYFNDSQRQATKDAGRIAGLDVKRIINEPTAAALAYGIDKKQGDNIVAVYDLGGGTFDISIIEIDSNDGDQTFEVLATNGDTHLGGEDFDNRLINYLADEFKKEQGLDLRKDPLAMQRLKEAAEKAKIELSSTNHTEVNLPYITADATGPKHLVIKITRAKLESLVEDLILRTLEPLKVALADADLSVSDVNEVILVGGQTRMPKVQEAVTNFFGKEPRKDVNPDEAVAVGAAIQAGVLSGDVKDVLLLDVTPLSLGIETMGSVMTKLIEKNTTIPTKAQQVFSTADDNQSAVTIHVLQGERKQASANKSLGQFNLDGIEPAPRGQPQIEVMFDIDADGILHVSATDKKTGKKQNITIKASSGLSEEEVAQMVRDAEAHADEDKKFEELVQARNQADGLVHATKKQVEEAGDALPSEDKEKIQAAMAAVDTATKGNDKEAIEKASQELIEASAKLMEIAQAKSQAQGGAETNAGKQANAAADDVVDAEFEEVKDDKK.

Threonine 198 bears the Phosphothreonine; by autocatalysis mark. The segment at 605-624 (SQAQGGAETNAGKQANAAAD) is disordered.

It belongs to the heat shock protein 70 family.

Functionally, acts as a chaperone. The chain is Chaperone protein DnaK from Shewanella putrefaciens (strain CN-32 / ATCC BAA-453).